The following is a 156-amino-acid chain: Keratin, high-sulfur matrix protein, B2B (156 aa).

An N-acetylalanine modification is found at alanine 1. 4 consecutive repeats follow at residues 26 to 35 (PTCSQTSCCQ), 36 to 45 (PTSIQTSCCQ), 46 to 55 (PISIQTSCCQ), and 56 to 65 (PTCLQTSGCE).

Functionally, the keratin products of mammalian epidermal derivatives such as wool and hair consist of microfibrils embedded in a rigid matrix of other proteins. The matrix proteins include the high-sulfur and high-tyrosine keratins, having molecular weights of 6-20 kDa, whereas the microfibrils contain the larger, low-sulfur keratins (40-56 kDa). The chain is Keratin, high-sulfur matrix protein, B2B from Ovis aries (Sheep).